The sequence spans 616 residues: Dihydroxy-acid dehydratase (616 aa).

Residue Asp-81 coordinates Mg(2+). Residue Cys-122 participates in [2Fe-2S] cluster binding. The Mg(2+) site is built by Asp-123 and Lys-124. Lys-124 is subject to N6-carboxylysine. Cys-195 provides a ligand contact to [2Fe-2S] cluster. Glu-491 provides a ligand contact to Mg(2+). The active-site Proton acceptor is Ser-517.

This sequence belongs to the IlvD/Edd family. In terms of assembly, homodimer. Requires [2Fe-2S] cluster as cofactor. Mg(2+) serves as cofactor.

It carries out the reaction (2R)-2,3-dihydroxy-3-methylbutanoate = 3-methyl-2-oxobutanoate + H2O. The catalysed reaction is (2R,3R)-2,3-dihydroxy-3-methylpentanoate = (S)-3-methyl-2-oxopentanoate + H2O. It participates in amino-acid biosynthesis; L-isoleucine biosynthesis; L-isoleucine from 2-oxobutanoate: step 3/4. The protein operates within amino-acid biosynthesis; L-valine biosynthesis; L-valine from pyruvate: step 3/4. Its function is as follows. Functions in the biosynthesis of branched-chain amino acids. Catalyzes the dehydration of (2R,3R)-2,3-dihydroxy-3-methylpentanoate (2,3-dihydroxy-3-methylvalerate) into 2-oxo-3-methylpentanoate (2-oxo-3-methylvalerate) and of (2R)-2,3-dihydroxy-3-methylbutanoate (2,3-dihydroxyisovalerate) into 2-oxo-3-methylbutanoate (2-oxoisovalerate), the penultimate precursor to L-isoleucine and L-valine, respectively. This Shigella sonnei (strain Ss046) protein is Dihydroxy-acid dehydratase.